The sequence spans 426 residues: Dihydroorotase (426 aa).

The Zn(2+) site is built by H55 and H57. Substrate contacts are provided by residues H57–R59 and N89. Positions 147, 174, 233, and 306 each coordinate Zn(2+). Residue D306 is part of the active site. Residues H310 and F324–G325 each bind substrate.

This sequence belongs to the metallo-dependent hydrolases superfamily. DHOase family. Class I DHOase subfamily. Zn(2+) is required as a cofactor.

The enzyme catalyses (S)-dihydroorotate + H2O = N-carbamoyl-L-aspartate + H(+). Its pathway is pyrimidine metabolism; UMP biosynthesis via de novo pathway; (S)-dihydroorotate from bicarbonate: step 3/3. Catalyzes the reversible cyclization of carbamoyl aspartate to dihydroorotate. This chain is Dihydroorotase, found in Thermus aquaticus.